A 340-amino-acid polypeptide reads, in one-letter code: UPF0324 membrane protein BC_5174 (340 aa).

A run of 10 helical transmembrane segments spans residues 13 to 35 (FGFSQGIGITLLIAIAAKYLAEL), 40 to 59 (IMGQLVIAILIGMVWRAAIG), 99 to 118 (VLVIAAVVITFTIFVVYGLT), 128 to 150 (GILTACGTAICGAAAVVAIAPQV), 157 to 179 (TAVGAAIIAILGTIFTLIYTLLY), 189 to 211 (YGVFSGATLHEIAHVIAAAAPGG), 218 to 240 (AVIVKLTRVAMLVPVAILIGLWF), 255 to 277 (LPIPWFIFGFLAMSAVHSLGIIP), 279 to 301 (VVAGYIVVLAYMLIAMAMAGLGL), and 316 to 338 (FVAGLIGSVCLSVLGYVLVYALG).

It belongs to the UPF0324 family.

It localises to the cell membrane. This chain is UPF0324 membrane protein BC_5174, found in Bacillus cereus (strain ATCC 14579 / DSM 31 / CCUG 7414 / JCM 2152 / NBRC 15305 / NCIMB 9373 / NCTC 2599 / NRRL B-3711).